A 609-amino-acid polypeptide reads, in one-letter code: METELHLAAGYCAATGVYRSGHPPQFAAAAALSFPEYILPHMLLPGRRARPAFVDASTGAALSFAGLRALSLRVARALAAAGLRRGRVALLLSPNSLHFPALSLAVLSLGAVLSAANPLLTPDELARQADDAKPFLALVTGELAPKLRSIAPDVKLVLVEQLLADVAAEVDDDETLDLPAANIGRDDAALLFYSSGTTGRSKGVVSTHGNAIAMAASLERAWGGGGGGGEKPQQYDDHDEAYGCVLPMFHMFGFSSFVMGTAALGATAVVVPGRFSVEKTMAAVEEYGVTRLLVVPPMVVKMVAAAAGDGEPSRRRLRLRQVVSSGAPLQREHMARFRSCFPAVNLGQCYGLTETTGIVTMCDLQHNDNGIDKVEMPPSSTDMTFVAVAATTTEVKERSTGGGGGGGGVSIGRLMPDVEAKIVDPDSGELLPPRRTGELWVRGPSTMRGYLNNEEATALALVAAAGSVSVSGGGERWLRTGDLCYVDSRGLVYVVDRVKELIKCNAYQVAPAELEDVLATHPDIHDAAVAPYPDKEAGEIPMAYVVKKQGSGHLQEDEVISFVQNKVAPYKKIRKVVFVDSIPRSPSGKILRRQLKNLLQGSILHRSRM.

ATP is bound by residues S194, S195, G196, T197, T198, and K202. Positions 252 and 256 each coordinate (E)-4-coumaroyl-AMP. R274 is a CoA binding site. Residues S276–Q348 form an SBD1 region. 4 residues coordinate (E)-4-coumaroyl-AMP: G326, Q348, T353, and M361. Positions 348 and 353 each coordinate ATP. Positions C349–Y450 are SBD2. 2 residues coordinate ATP: D482 and R497. K499 and K503 together coordinate (E)-4-coumaroyl-AMP. A506 lines the CoA pocket. Residue K589 coordinates ATP.

This sequence belongs to the ATP-dependent AMP-binding enzyme family. Mg(2+) is required as a cofactor.

The enzyme catalyses (E)-4-coumarate + ATP + CoA = (E)-4-coumaroyl-CoA + AMP + diphosphate. It carries out the reaction (E)-4-coumarate + ATP + H(+) = (E)-4-coumaroyl-AMP + diphosphate. The catalysed reaction is (E)-4-coumaroyl-AMP + CoA = (E)-4-coumaroyl-CoA + AMP + H(+). In terms of biological role, carboxylate--CoA ligase that may use 4-coumarate as substrate. Follows a two-step reaction mechanism, wherein the carboxylate substrate first undergoes adenylation by ATP, followed by a thioesterification in the presence of CoA to yield the final CoA thioester. The chain is Putative 4-coumarate--CoA ligase-like 8 (4CLL8) from Oryza sativa subsp. japonica (Rice).